The sequence spans 439 residues: Magnesium-dependent glutamate N-prenyltransferase (439 aa).

Mg(2+) is bound by residues Asn-322, Thr-326, Glu-330, and Phe-337.

This sequence belongs to the terpene synthase family. The cofactor is Mg(2+).

The enzyme catalyses dimethylallyl diphosphate + L-glutamate = prekainate + diphosphate. It participates in secondary metabolite biosynthesis. In terms of biological role, magnesium-dependent glutamate N-prenyltransferase: part of the gene cluster that mediates the biosynthesis of kainic acid (KA) and derivatives, natural products with neurochemical activity acting as ionotropic glutamate receptor (iGluR) agonists, thus being neurotoxins. Catalyzes the conversion of L-glutamic acid (L-Glu) to prekainic acid in the presence of dimethylallyl diphosphate (DMAPP). Can also use geranyl diphosphate (GPP) as substrate, thus leading to the formation of N-geranyl-L-glutamic acid (L-NGG). The chain is Magnesium-dependent glutamate N-prenyltransferase from Digenea simplex (Marine red alga).